The sequence spans 838 residues: pre-rRNA 2'-O-ribose RNA methyltransferase FTSJ3 (838 aa).

Residues glycine 56, tryptophan 58, aspartate 76, aspartate 92, and aspartate 117 each contribute to the S-adenosyl-L-methionine site. The Proton acceptor role is filled by lysine 157. Residues 332–367 form a disordered region; sequence ISLSSEEEEEGDEEEAVAETKQAPEEEEEREEEQLN. 3 positions are modified to phosphoserine: serine 333, serine 335, and serine 336. Over residues 336 to 348 the composition is skewed to acidic residues; that stretch reads SEEEEEGDEEEAV. Citrulline is present on arginine 390. The tract at residues 453–482 is disordered; sequence IYVSDAEDDDDTSLESDLDPEELAGVRTHS. The span at 457-474 shows a compositional bias: acidic residues; it reads DAEDDDDTSLESDLDPEE. Serine 532 and serine 545 each carry phosphoserine. Positions 537–639 are disordered; sequence DADEALEISQ…GRGSKADEDG (103 aa). Lysine 571 is covalently cross-linked (Glycyl lysine isopeptide (Lys-Gly) (interchain with G-Cter in SUMO2)). Serine 576 is modified (phosphoserine). Glycyl lysine isopeptide (Lys-Gly) (interchain with G-Cter in SUMO2) cross-links involve residues lysine 634 and lysine 650. The residue at position 667 (serine 667) is a Phosphoserine. Lysine 669 participates in a covalent cross-link: Glycyl lysine isopeptide (Lys-Gly) (interchain with G-Cter in SUMO2). Position 679 is a phosphoserine (serine 679). Lysine 701 participates in a covalent cross-link: Glycyl lysine isopeptide (Lys-Gly) (interchain with G-Cter in SUMO2). Positions 730 to 768 form a coiled coil; sequence IKKVAEAKARKKRRVLKKLEQTKKKAEAVVNTVDISERE. Arginine 774 is subject to Citrulline. The segment covering 802 to 812 has biased composition (basic residues); it reads VRRPAGVKGHF. The tract at residues 802-838 is disordered; that stretch reads VRRPAGVKGHFKVVDSRMKKDQRAQQRKEQKKKHKRK. The segment covering 813–829 has biased composition (basic and acidic residues); the sequence is KVVDSRMKKDQRAQQRK.

Belongs to the class I-like SAM-binding methyltransferase superfamily. RNA methyltransferase RlmE family. SPB1 subfamily. As to quaternary structure, interacts with NIP7. Citrullinated by PADI4.

It localises to the nucleus. The protein localises to the nucleolus. It catalyses the reaction a ribonucleotide in rRNA + S-adenosyl-L-methionine = a 2'-O-methylribonucleotide in rRNA + S-adenosyl-L-homocysteine + H(+). Functionally, RNA 2'-O-methyltransferase involved in the processing of the 34S pre-rRNA to 18S rRNA and in 40S ribosomal subunit formation. The chain is pre-rRNA 2'-O-ribose RNA methyltransferase FTSJ3 (Ftsj3) from Mus musculus (Mouse).